Reading from the N-terminus, the 264-residue chain is Glutamate racemase (264 aa).

Residues 12–13 and 44–45 each bind substrate; these read DS and YG. Cys-75 acts as the Proton donor/acceptor in catalysis. 76 to 77 lines the substrate pocket; it reads NT. Residue Cys-186 is the Proton donor/acceptor of the active site. 187-188 provides a ligand contact to substrate; the sequence is TH.

This sequence belongs to the aspartate/glutamate racemases family.

It catalyses the reaction L-glutamate = D-glutamate. It participates in cell wall biogenesis; peptidoglycan biosynthesis. Functionally, provides the (R)-glutamate required for cell wall biosynthesis. This is Glutamate racemase from Stutzerimonas stutzeri (strain A1501) (Pseudomonas stutzeri).